Consider the following 116-residue polypeptide: MSHLLDSVDAASLRSDVPAFRPGDTVNVHVRVIEGNRSRVQQFKGVVIRRQGAGVRETFTVRKVSFSVGVERTFPVHTPIVEKIELVTRGDVRRAKLYYLRELRGKAAKIKEKRDS.

This sequence belongs to the bacterial ribosomal protein bL19 family.

Its function is as follows. This protein is located at the 30S-50S ribosomal subunit interface and may play a role in the structure and function of the aminoacyl-tRNA binding site. The sequence is that of Large ribosomal subunit protein bL19 (rplS) from Streptomyces lividans.